Reading from the N-terminus, the 180-residue chain is MQNSPWFKENPLRLFITGRPGVGKTTLIKGLVSELRELKIAGFYTEEVRERGERTGFLFVVIGDGSCPLASTKPIGKERVGRYFVVDSLTLLPQVKQRLEVADLVIMDEIGPMEKKIGDLWKLIQGVLSSNKPVVASVHRSMNIEGKRYELTPVNRDRVREDILNEIRRYFGTKQDTFSL.

Residues 18 to 25 (GRPGVGKT) and 104 to 111 (LVIMDEIG) each bind ATP.

The protein belongs to the THEP1 NTPase family.

It carries out the reaction a ribonucleoside 5'-triphosphate + H2O = a ribonucleoside 5'-diphosphate + phosphate + H(+). Has nucleotide phosphatase activity towards ATP, GTP, CTP, TTP and UTP. May hydrolyze nucleoside diphosphates with lower efficiency. The sequence is that of Nucleoside-triphosphatase THEP1 from Metallosphaera sedula (strain ATCC 51363 / DSM 5348 / JCM 9185 / NBRC 15509 / TH2).